The sequence spans 384 residues: Sensor protein VanS (384 aa).

2 helical membrane-spanning segments follow: residues 21–41 (MYIVAIVVVAIVFVLYIRSMI) and 76–96 (IDIFIYVAIVISILILCRVML). The region spanning 161 to 376 (YLAHDIKTPL…TFRVELPAMP (216 aa)) is the Histidine kinase domain. His-164 is modified (phosphohistidine; by autocatalysis). Residues 221 to 384 (QTITLTKTHI…MPDLVDKRRS (164 aa)) are involved in low-affinity ATP-binding. Exhibits higher affinity for ATP than GTP.

In terms of processing, autophosphorylated.

It is found in the membrane. The catalysed reaction is ATP + protein L-histidine = ADP + protein N-phospho-L-histidine.. Its activity is regulated as follows. Phosphorylation of VanR inhibited by EDTA. In terms of biological role, member of the two-component regulatory system VanS/VanR. Functions as a sensor protein kinase which is autophosphorylated at a histidine residue in response to environmental stimuli, such as glycopeptide antibiotics. VanS transfers its phosphate group to transcriptional regulatory protein VanR, thereby modulating expression of target genes. Binds directly to, and autophosphorylation activity is enhanced by, the glycopeptides vancomycin and teicoplanin, in vitro. However it has also been reported that autophosphorylation, phosphate transfer to VanR and dephosphorylation of phospho-VanR are all unaffected by the presence of vancomycin, in vitro. In the absence of vancomycin, negatively regulates VanR-mediated activation of vanS, vanH, vanA and vanX, probably as a result of dephosphorylating phospho-VanR. May inhibit promoter-specific DNA binding by VanR. Involved in conferring vancomycin resistance. This chain is Sensor protein VanS, found in Enterococcus faecium (Streptococcus faecium).